The chain runs to 601 residues: Aspartate--tRNA(Asp/Asn) ligase (601 aa).

An L-aspartate-binding site is contributed by E177. Residues 201–204 (QLFK) are aspartate. R223 provides a ligand contact to L-aspartate. ATP-binding positions include 223–225 (RDE) and Q232. Position 455 (H455) interacts with L-aspartate. Residue E489 participates in ATP binding. R496 contacts L-aspartate. 541–544 (GWDR) contacts ATP. Residues 568–601 (VDPLTDAPAPIPLEQRRETGVDFKPKKKTDESAV) form a disordered region. Basic and acidic residues predominate over residues 581-601 (EQRRETGVDFKPKKKTDESAV).

Belongs to the class-II aminoacyl-tRNA synthetase family. Type 1 subfamily. In terms of assembly, homodimer.

It localises to the cytoplasm. The enzyme catalyses tRNA(Asx) + L-aspartate + ATP = L-aspartyl-tRNA(Asx) + AMP + diphosphate. Aspartyl-tRNA synthetase with relaxed tRNA specificity since it is able to aspartylate not only its cognate tRNA(Asp) but also tRNA(Asn). Reaction proceeds in two steps: L-aspartate is first activated by ATP to form Asp-AMP and then transferred to the acceptor end of tRNA(Asp/Asn). The protein is Aspartate--tRNA(Asp/Asn) ligase of Corynebacterium diphtheriae (strain ATCC 700971 / NCTC 13129 / Biotype gravis).